The primary structure comprises 215 residues: 3-isopropylmalate dehydratase small subunit (215 aa).

The protein belongs to the LeuD family. LeuD type 1 subfamily. Heterodimer of LeuC and LeuD.

It carries out the reaction (2R,3S)-3-isopropylmalate = (2S)-2-isopropylmalate. It participates in amino-acid biosynthesis; L-leucine biosynthesis; L-leucine from 3-methyl-2-oxobutanoate: step 2/4. Its function is as follows. Catalyzes the isomerization between 2-isopropylmalate and 3-isopropylmalate, via the formation of 2-isopropylmaleate. In Ectopseudomonas mendocina (strain ymp) (Pseudomonas mendocina), this protein is 3-isopropylmalate dehydratase small subunit.